Here is a 155-residue protein sequence, read N- to C-terminus: 6,7-dimethyl-8-ribityllumazine synthase (155 aa).

5-amino-6-(D-ribitylamino)uracil is bound by residues F26, 60-62 (ALE), and 84-86 (AVI). 89 to 90 (ET) is a (2S)-2-hydroxy-3-oxobutyl phosphate binding site. H92 acts as the Proton donor in catalysis. N117 is a binding site for 5-amino-6-(D-ribitylamino)uracil. R131 is a binding site for (2S)-2-hydroxy-3-oxobutyl phosphate.

It belongs to the DMRL synthase family.

It carries out the reaction (2S)-2-hydroxy-3-oxobutyl phosphate + 5-amino-6-(D-ribitylamino)uracil = 6,7-dimethyl-8-(1-D-ribityl)lumazine + phosphate + 2 H2O + H(+). The protein operates within cofactor biosynthesis; riboflavin biosynthesis; riboflavin from 2-hydroxy-3-oxobutyl phosphate and 5-amino-6-(D-ribitylamino)uracil: step 1/2. Catalyzes the formation of 6,7-dimethyl-8-ribityllumazine by condensation of 5-amino-6-(D-ribitylamino)uracil with 3,4-dihydroxy-2-butanone 4-phosphate. This is the penultimate step in the biosynthesis of riboflavin. The protein is 6,7-dimethyl-8-ribityllumazine synthase of Chromobacterium violaceum (strain ATCC 12472 / DSM 30191 / JCM 1249 / CCUG 213 / NBRC 12614 / NCIMB 9131 / NCTC 9757 / MK).